The chain runs to 22 residues: MKTKAAVLFETHKPFEIVELEL.

The protein belongs to the zinc-containing alcohol dehydrogenase family. Homotetramer. It depends on NADH as a cofactor.

It is found in the cytoplasm. It catalyses the reaction N,N-dimethyl-4-nitrosoaniline + a primary alcohol = 4-(hydroxylamino)-N,N-dimethylaniline + an aldehyde. The catalysed reaction is ethanol + A = acetaldehyde + AH2. This is a novel enzyme, catalytically different from common alcohol dehydrogenases. It is effective in oxidizing ethanol, other primary alcohols and benzylalcohol only in the presence of p-nitroso-N,N-dimethylaniline (NDMA) as an electron acceptor. NADH acts as a cofactor here instead of as a coenzyme. In Rhodococcus erythropolis (Arthrobacter picolinophilus), this protein is NDMA-dependent alcohol dehydrogenase.